Reading from the N-terminus, the 931-residue chain is Protein unc-45 homolog B (931 aa).

3 TPR repeats span residues 6–39, 43–76, and 77–110; these read AVQLKEEGNRHFQLQDYKAATNSYSQALKLTKDK, ATLYRNRAACGLKTESYVQAASDASRAIDINSSD, and IKALYRRCQALEHLGKLDQAFKDVQRCATLEPRN. 3 ARM repeats span residues 169-208, 211-250, and 751-790; these read EAGAEKIFQNNGVALLLQLLDTKKPELVLAAVRTLSGMCS, QARATVILHAVRIDRICSLMAVENEEMSLAVCNLLQAIID, and DKLRQKIFKERALPDIENYMFENHDQLRQAATECMCNMVL.

Interacts with HSP90 in an ATP-independent manner. Interacts with UBE4B; the interaction may target UNC45B for proteasomal degradation. Expressed in eye lens tissues. Expressed in muscle (at protein level).

The protein resides in the cytoplasm. It localises to the myofibril. Its subcellular location is the sarcomere. It is found in the z line. The protein localises to the a band. The protein resides in the perinuclear region. It localises to the cytosol. Acts as a co-chaperone for HSP90 and is required for proper folding of the myosin motor domain. Plays a role in sarcomere formation during muscle cell development. Is necessary for normal early lens development. The protein is Protein unc-45 homolog B of Homo sapiens (Human).